The chain runs to 467 residues: ADP-dependent glucose/glucosamine kinase (467 aa).

Positions Arg-10–Arg-467 constitute an ADPK domain. Residues Asp-42, Glu-96, Gly-120, Gly-120–Gln-121, His-184, and Asp-211 contribute to the D-glucose site. Residue Glu-279 participates in Mg(2+) binding. Asn-305 contacts ADP. Position 308 (Glu-308) interacts with Mg(2+). Residues His-352–Thr-353, Val-440, and Gly-450 contribute to the ADP site. Position 451 (Asp-451) interacts with D-glucose. Asp-451 is a Mg(2+) binding site. Asp-451 (proton acceptor) is an active-site residue.

The protein belongs to the ADP-dependent glucokinase family. Monomer. Requires Mg(2+) as cofactor.

Its subcellular location is the cytoplasm. The catalysed reaction is D-glucose + ADP = D-glucose 6-phosphate + AMP + H(+). The enzyme catalyses D-glucosamine + ADP = D-glucosamine 6-phosphate + AMP + H(+). It participates in carbohydrate degradation; glycolysis. Functionally, catalyzes the ADP-dependent phosphorylation of D-glucose to D-glucose 6-phosphate and glucosamine to glucosamine 6-phosphate. Can also use CDP as the phosphoryl group donor and D-1,5-anhydroglucitol as the phosphoryl group acceptor. The polypeptide is ADP-dependent glucose/glucosamine kinase (Thermococcus litoralis (strain ATCC 51850 / DSM 5473 / JCM 8560 / NS-C)).